The following is a 288-amino-acid chain: 4-hydroxy-3-methylbut-2-enyl diphosphate reductase (288 aa).

C12 is a binding site for [4Fe-4S] cluster. The (2E)-4-hydroxy-3-methylbut-2-enyl diphosphate site is built by H42 and H77. Dimethylallyl diphosphate is bound by residues H42 and H77. Residues H42 and H77 each contribute to the isopentenyl diphosphate site. C99 serves as a coordination point for [4Fe-4S] cluster. H127 serves as a coordination point for (2E)-4-hydroxy-3-methylbut-2-enyl diphosphate. H127 is a binding site for dimethylallyl diphosphate. H127 is a binding site for isopentenyl diphosphate. E129 (proton donor) is an active-site residue. A (2E)-4-hydroxy-3-methylbut-2-enyl diphosphate-binding site is contributed by T165. C193 contacts [4Fe-4S] cluster. (2E)-4-hydroxy-3-methylbut-2-enyl diphosphate-binding residues include S221, S222, N223, and S265. Positions 221, 222, 223, and 265 each coordinate dimethylallyl diphosphate. Residues S221, S222, N223, and S265 each coordinate isopentenyl diphosphate.

The protein belongs to the IspH family. [4Fe-4S] cluster is required as a cofactor.

The catalysed reaction is isopentenyl diphosphate + 2 oxidized [2Fe-2S]-[ferredoxin] + H2O = (2E)-4-hydroxy-3-methylbut-2-enyl diphosphate + 2 reduced [2Fe-2S]-[ferredoxin] + 2 H(+). It carries out the reaction dimethylallyl diphosphate + 2 oxidized [2Fe-2S]-[ferredoxin] + H2O = (2E)-4-hydroxy-3-methylbut-2-enyl diphosphate + 2 reduced [2Fe-2S]-[ferredoxin] + 2 H(+). It functions in the pathway isoprenoid biosynthesis; dimethylallyl diphosphate biosynthesis; dimethylallyl diphosphate from (2E)-4-hydroxy-3-methylbutenyl diphosphate: step 1/1. It participates in isoprenoid biosynthesis; isopentenyl diphosphate biosynthesis via DXP pathway; isopentenyl diphosphate from 1-deoxy-D-xylulose 5-phosphate: step 6/6. In terms of biological role, catalyzes the conversion of 1-hydroxy-2-methyl-2-(E)-butenyl 4-diphosphate (HMBPP) into a mixture of isopentenyl diphosphate (IPP) and dimethylallyl diphosphate (DMAPP). Acts in the terminal step of the DOXP/MEP pathway for isoprenoid precursor biosynthesis. The protein is 4-hydroxy-3-methylbut-2-enyl diphosphate reductase of Caldanaerobacter subterraneus subsp. tengcongensis (strain DSM 15242 / JCM 11007 / NBRC 100824 / MB4) (Thermoanaerobacter tengcongensis).